We begin with the raw amino-acid sequence, 301 residues long: Chitin deacetylase 1 (301 aa).

Residues 1-24 form the signal peptide; the sequence is MKIFNTIQSVLFAAFFLKQGNCLA. 3 N-linked (GlcNAc...) asparagine glycosylation sites follow: Asn26, Asn50, and Asn68. A disulfide bridge links Cys107 with Cys290. The NodB homology domain maps to 108–288; the sequence is FKLSQTFDDG…LIGSDQLTIA (181 aa). Asp115 acts as the Proton acceptor in catalysis. Asp115 lines the acetate pocket. Co(2+) contacts are provided by Asp116, His162, and His166. N-linked (GlcNAc...) asparagine glycosylation is present at Asn189. Tyr203 serves as a coordination point for acetate. His263 (proton donor) is an active-site residue.

It belongs to the polysaccharide deacetylase family. Co(2+) is required as a cofactor.

The protein resides in the prospore. It carries out the reaction [(1-&gt;4)-N-acetyl-beta-D-glucosaminyl](n) + n H2O = chitosan + n acetate. In terms of biological role, hydrolyzes the N-acetamido groups of N-acetyl-D-glucosamine residues in chitin to form chitosan and acetate. Chitosan is a component of the spore wall. This chain is Chitin deacetylase 1, found in Saccharomyces cerevisiae (strain ATCC 204508 / S288c) (Baker's yeast).